Reading from the N-terminus, the 648-residue chain is tRNA 5-methylaminomethyl-2-thiouridine biosynthesis bifunctional protein MnmC (648 aa).

The segment at Met1–Ala228 is tRNA (mnm(5)s(2)U34)-methyltransferase. The segment at Ile252–Gly648 is FAD-dependent cmnm(5)s(2)U34 oxidoreductase.

It in the N-terminal section; belongs to the methyltransferase superfamily. tRNA (mnm(5)s(2)U34)-methyltransferase family. In the C-terminal section; belongs to the DAO family. FAD serves as cofactor.

The protein resides in the cytoplasm. It carries out the reaction 5-aminomethyl-2-thiouridine(34) in tRNA + S-adenosyl-L-methionine = 5-methylaminomethyl-2-thiouridine(34) in tRNA + S-adenosyl-L-homocysteine + H(+). Catalyzes the last two steps in the biosynthesis of 5-methylaminomethyl-2-thiouridine (mnm(5)s(2)U) at the wobble position (U34) in tRNA. Catalyzes the FAD-dependent demodification of cmnm(5)s(2)U34 to nm(5)s(2)U34, followed by the transfer of a methyl group from S-adenosyl-L-methionine to nm(5)s(2)U34, to form mnm(5)s(2)U34. The chain is tRNA 5-methylaminomethyl-2-thiouridine biosynthesis bifunctional protein MnmC from Burkholderia lata (strain ATCC 17760 / DSM 23089 / LMG 22485 / NCIMB 9086 / R18194 / 383).